The chain runs to 350 residues: Glucose-6-phosphate 3-dehydrogenase (350 aa).

Belongs to the Gfo/Idh/MocA family.

It catalyses the reaction D-glucose 6-phosphate + NAD(+) = 3-dehydro-D-glucose 6-phosphate + NADH + H(+). It participates in antibiotic biosynthesis; kanosamine biosynthesis. Involved in the biosynthesis of kanosamine (3-amino-3-deoxy-D-glucose), which is known to have antibiotic and antifungal properties, and to be a precursor of the antibiotic neotrehalosadiamine (3,3'-diamino-3,3'-dideoxy-alpha,beta-trehalose (NTD)). Catalyzes the oxidation of glucose 6-phosphate to 3-oxo-D-glucose 6-phosphate. It can only use NAD. In Bacillus subtilis (strain 168), this protein is Glucose-6-phosphate 3-dehydrogenase (ntdC).